A 228-amino-acid chain; its full sequence is Peroxiredoxin-like 2C (228 aa).

Residues 1-22 (MAAPSEAPVTRQVSGHAAPAPV) are disordered. Over residues 13 to 22 (VSGHAAPAPV) the composition is skewed to low complexity.

Belongs to the peroxiredoxin-like PRXL2 family. PRXL2C subfamily.

Its function is as follows. May positively regulate ERK1/2 signaling and AKT1 activation leading to HIF1A up-regulation with an increased expression of glycolysis genes and enhanced glycolysis. This Bos taurus (Bovine) protein is Peroxiredoxin-like 2C (PRXL2C).